A 359-amino-acid polypeptide reads, in one-letter code: 4-galactosyl-N-acetylglucosaminide 3-alpha-L-fucosyltransferase 9 (359 aa).

The Cytoplasmic portion of the chain corresponds to 1-11 (MTSASKGILRP). The helical; Signal-anchor for type II membrane protein transmembrane segment at 12–32 (FLIVCIILACSMVCLFIYIKP) threads the bilayer. The Lumenal portion of the chain corresponds to 33 to 359 (TNSWIFSPME…VGNLEKWFWN (327 aa)). The N-linked (GlcNAc...) asparagine glycan is linked to Asn-62. Residues 63-168 (ETTILIWVWP…RRDSDIQVPY (106 aa)) form an acceptor-binding region. Gln-75 is a binding site for a beta-D-galactosyl-(1-&gt;4)-N-acetyl-beta-D-glucosaminyl derivative. Cystine bridges form between Cys-82/Cys-335, Cys-91/Cys-338, and Cys-190/Cys-238. An N-linked (GlcNAc...) asparagine glycan is attached at Asn-101. Glu-137 provides a ligand contact to a beta-D-galactosyl-(1-&gt;4)-N-acetyl-beta-D-glucosaminyl derivative. Glu-137 functions as the Nucleophile in the catalytic mechanism. Residue Glu-137 participates in GDP-beta-L-fucose binding. Residue Asn-153 is glycosylated (N-linked (GlcNAc...) asparagine). GDP-beta-L-fucose contacts are provided by Tyr-168, Val-192, Ser-194, Asn-195, Arg-202, Val-226, Tyr-241, Asn-246, Tyr-252, Glu-255, and Lys-256. The interval 169-326 (GFLTVSTNPF…NWRKDFTVNL (158 aa)) is donor-binding. An acceptor-binding region spans residues 327–359 (PRFWESHACLACDHVKRHQEYKSVGNLEKWFWN).

It belongs to the glycosyltransferase 10 family. As to quaternary structure, homodimer. N-glycosylated with complex-type N-glycans.

The protein localises to the golgi apparatus. The protein resides in the trans-Golgi network membrane. It is found in the golgi apparatus membrane. The catalysed reaction is a beta-D-galactosyl-(1-&gt;4)-N-acetyl-beta-D-glucosaminyl derivative + GDP-beta-L-fucose = a beta-D-galactosyl-(1-&gt;4)-[alpha-L-fucosyl-(1-&gt;3)]-N-acetyl-beta-D-glucosaminyl derivative + GDP + H(+). The enzyme catalyses an alpha-Neu5Ac-(2-&gt;3)-beta-D-Gal-(1-&gt;4)-beta-D-GlcNAc-(1-&gt;3)-beta-D-Gal-(1-&gt;4)-beta-D-GlcNAc derivative + GDP-beta-L-fucose = an alpha-Neu5Ac-(2-&gt;3)-beta-D-Gal-(1-&gt;4)-beta-D-GlcNAc-(1-&gt;3)-beta-D-Gal-(1-&gt;4)-[alpha-L-Fuc-(1-&gt;3)]-beta-D-GlcNAc derivative + GDP + H(+). It catalyses the reaction alpha-N-glycoloylneuraminosyl-(2-&gt;3)-beta-D-galactosyl-(1-&gt;4)-N-acetyl-beta-D-glucosaminyl-(1-&gt;3)-beta-D-galactosyl-(1-&gt;4)-N-acetyl-beta-D-glucosaminyl-(1-&gt;3)-beta-D-galactosyl-(1-&gt;4)-beta-D-glucosyl-(1&lt;-&gt;1')-ceramide + GDP-beta-L-fucose = alpha-N-glycoloylneuraminosyl-(2-&gt;3)-beta-D-galactosyl-(1-&gt;4)-N-acetyl-beta-D-glucosaminyl-(1-&gt;3)-beta-D-galactosyl-(1-&gt;4)-[alpha-L-fucosyl-(1-&gt;3)]-N-acetyl-beta-D-glucosaminyl-(1-&gt;3)-beta-D-galactosyl-(1-&gt;4)-beta-D-glucosyl-(1&lt;-&gt;1')-ceramide + GDP + H(+). It carries out the reaction alpha-D-galactosyl-(1-&gt;3)-beta-D-galactosyl-(1-&gt;4)-N-acetyl-beta-D-glucosaminyl-(1-&gt;3)-beta-D-galactosyl-(1-&gt;4)-beta-D-glucosyl-(1&lt;-&gt;1')-ceramide + GDP-beta-L-fucose = a neolactoside IV(3)-alpha-Gal,III(3)-alpha-Fuc-nLc4Cer + GDP + H(+). The catalysed reaction is a neolactoside nLc4Cer + GDP-beta-L-fucose = a neolactoside III(3)-alpha-Fuc-nLc4Cer + GDP + H(+). The enzyme catalyses an N-acetyl-alpha-neuraminyl-(2-&gt;3)-beta-D-galactosyl-(1-&gt;4)-N-acetyl-beta-D-glucosaminyl derivative + GDP-beta-L-fucose = an alpha-Neu5Ac-(2-&gt;3)-beta-D-Gal-(1-&gt;4)-[alpha-L-Fuc-(1-&gt;3)]-beta-D-GlcNAc derivative + GDP + H(+). It catalyses the reaction beta-D-Gal-(1-&gt;4)-beta-D-GlcNAc-(1-&gt;3)-beta-D-Gal-(1-&gt;4)-D-Glc + GDP-beta-L-fucose = beta-D-Gal-(1-&gt;4)-[alpha-L-Fuc-(1-&gt;3)]-beta-D-GlcNAc-(1-&gt;3)-beta-D-Gal-(1-&gt;4)-D-Glc + GDP + H(+). It carries out the reaction an alpha-L-Fuc-(1-&gt;2)-beta-D-Gal-(1-&gt;4)-beta-D-GlcNAc derivative + GDP-beta-L-fucose = an alpha-L-Fuc-(1-&gt;2)-beta-D-Gal-(1-&gt;4)-[alpha-L-Fuc-(1-&gt;3)]-beta-D-GlcNAc derivative + GDP + H(+). Its pathway is protein modification; protein glycosylation. It functions in the pathway glycolipid biosynthesis. Its activity is regulated as follows. Activated by Mn2+. Functionally, catalyzes alpha(1-&gt;3) linkage of fucosyl moiety transferred from GDP-beta-L-fucose to N-acetyl glucosamine (GlcNAc) within type 2 lactosamine (LacNAc, beta-D-Gal-(1-&gt;4)-beta-D-GlcNAc-) glycan attached to glycolipids and N- or O-linked glycoproteins. Fucosylates distal type 2 LacNAc and its fucosylated (H-type 2 LacNAc) and sialylated (sialyl-type 2 LacNAc) derivatives to form Lewis x (Lex) (CD15) and Lewis y (Ley) antigenic epitopes involved in cell adhesion and differentiation. Generates Lex epitopes in the brain, presumably playing a role in the maintenance of neuronal stemness and neurite outgrowth in progenitor neural cells. Fucosylates the internal type 2 LacNAc unit of the polylactosamine chain to form VIM-2 antigen that serves as recognition epitope for SELE. Can also modify milk oligosaccharides in particular type 2 tetrasaccharide LNnT. The chain is 4-galactosyl-N-acetylglucosaminide 3-alpha-L-fucosyltransferase 9 from Bos taurus (Bovine).